Here is a 331-residue protein sequence, read N- to C-terminus: MIKDVYELLLSRKNEIEKQISLLDETSNNLLKEKIKEKWKEYCQTQGKLSTVLAIDGGMWIKELRSGIVYIVNAEIVKAEGFNVTPIDSKALIGVLRPGNMAKERVSLLMQLLELKLGLKHGDKAEYILFDGSIVKKIGKHKFSTKISLLDDIDVMDDKIYSLEENDEELMHKYLVAENQLVMSALISKYKGKLVWISKNSKSTELFQENISDVSLLELFTKNCGYTIGIEKKISSENIISPKASTILSNASFYSFYTRLKEGEKILKIEMFNNEIENIISILSPISIKGYPYPLLKVHTDVKVSRQDRERIKQLLNIKKKDIEWWPSQLF.

Residues D56 and D131 each contribute to the Mn(2+) site.

This sequence belongs to the NurA family. Homodimer. Interacts with SSB. The cofactor is Mn(2+).

The 5'-3' ssDNA and dsDNA exonuclease and ssDNA endonuclease activities are inhibited by SSB (single-stranded DNA-binding protein). Functionally, involved in DNA double-strand break (DSB) repair. Probably acts with HerA to stimulate resection of the 5' strand and produce the long 3' single-strand that is required for RadA loading. Exhibits both single-stranded endonuclease activity and 5'-3' exonuclease activity on single-stranded and double-stranded DNA. The sequence is that of DNA double-strand break repair nuclease NurA from Sulfurisphaera tokodaii (strain DSM 16993 / JCM 10545 / NBRC 100140 / 7) (Sulfolobus tokodaii).